Here is a 932-residue protein sequence, read N- to C-terminus: Beta-mannosidase A (932 aa).

The N-terminal stretch at 1–21 (MRIREQTILALLSPGLPPVTG) is a signal peptide. N40, N248, N283, N317, and N348 each carry an N-linked (GlcNAc...) asparagine glycan. The Proton donor role is filled by E480. N-linked (GlcNAc...) asparagine glycans are attached at residues N538, N609, N632, N659, N739, N762, and N791.

It belongs to the glycosyl hydrolase 2 family. Beta-mannosidase A subfamily. In terms of assembly, homodimer.

It is found in the secreted. The enzyme catalyses Hydrolysis of terminal, non-reducing beta-D-mannose residues in beta-D-mannosides.. It participates in glycan metabolism; N-glycan degradation. Exoglycosidase that cleaves the single beta-linked mannose residue from the non-reducing end of beta-mannosidic oligosaccharides of various complexity and length. Involved in the degradation of polymeric mannan and galactomannan. The protein is Beta-mannosidase A (mndA) of Aspergillus clavatus (strain ATCC 1007 / CBS 513.65 / DSM 816 / NCTC 3887 / NRRL 1 / QM 1276 / 107).